Reading from the N-terminus, the 400-residue chain is MAKAKYERTKPHLNIGTIGHIDHGKTTLTAAITKTLSQVGGAKATSYEEIDKAPEERERGITINTSHVEYQTETRHYAHVDCPGHADYIKNMITGAAQMDGSILVVSAADGPMPQTREHILLSRQVGVPYIVVFMNKTDMVDDPELLELVEMEVRELLSFYEFPGDDIPVLMGSALKALECGCGTRECEWCKHIWELMDAVDSYIPLPQRAVDKPFLMPIEDVFTITGRGTVTTGRVERGQVKVGDEVEIVGMREATRKTVCTGVEMFRKLLDYAEAGDNIGTLLRGVDRKEVERGMVLAKPGSIKPLTAFNAEVYVLTKEEGGRHTPFFGGYRPQFYFRTTDVTGIIQLPEGVEMVMPGDNVQMAIELITPIAIEEGLRFAIREGGRTVGAGVVTSLNE.

The tr-type G domain occupies 10–209 (KPHLNIGTIG…AVDSYIPLPQ (200 aa)). The interval 19-26 (GHIDHGKT) is G1. 19–26 (GHIDHGKT) serves as a coordination point for GTP. Position 26 (threonine 26) interacts with Mg(2+). The tract at residues 60–64 (GITIN) is G2. Residues 81-84 (DCPG) form a G3 region. Residues 81–85 (DCPGH) and 136–139 (NKTD) contribute to the GTP site. The interval 136 to 139 (NKTD) is G4. A G5 region spans residues 174-176 (SAL).

This sequence belongs to the TRAFAC class translation factor GTPase superfamily. Classic translation factor GTPase family. EF-Tu/EF-1A subfamily. Monomer.

The protein localises to the cytoplasm. It catalyses the reaction GTP + H2O = GDP + phosphate + H(+). Functionally, GTP hydrolase that promotes the GTP-dependent binding of aminoacyl-tRNA to the A-site of ribosomes during protein biosynthesis. This chain is Elongation factor Tu 1, found in Syntrophomonas wolfei subsp. wolfei (strain DSM 2245B / Goettingen).